The chain runs to 70 residues: DNA-directed RNA polymerase subunit omega (70 aa).

The protein belongs to the RNA polymerase subunit omega family. The RNAP catalytic core consists of 2 alpha, 1 beta, 1 beta' and 1 omega subunit. When a sigma factor is associated with the core the holoenzyme is formed, which can initiate transcription.

The catalysed reaction is RNA(n) + a ribonucleoside 5'-triphosphate = RNA(n+1) + diphosphate. Promotes RNA polymerase assembly. Latches the N- and C-terminal regions of the beta' subunit thereby facilitating its interaction with the beta and alpha subunits. The sequence is that of DNA-directed RNA polymerase subunit omega from Staphylococcus epidermidis (strain ATCC 35984 / DSM 28319 / BCRC 17069 / CCUG 31568 / BM 3577 / RP62A).